The primary structure comprises 34 residues: Hemopexin (34 aa).

The tract at residues 1-25 is disordered; the sequence is RPLTQHKPHTPGDEHPHGAEPPGXD.

The protein belongs to the hemopexin family. Expressed by the liver and secreted in plasma.

The protein localises to the secreted. Binds heme and transports it to the liver for breakdown and iron recovery, after which the free hemopexin returns to the circulation. The sequence is that of Hemopexin (HPX) from Gallus gallus (Chicken).